The primary structure comprises 156 residues: uncharacterized protein (156 aa).

Residues 43 to 84 are a coiled coil; it reads LKIDENEVKLEISVEKLKNLSRVCENIEQVVDKVVEELRYAL.

This is an uncharacterized protein from Aquifex aeolicus (strain VF5).